A 216-amino-acid chain; its full sequence is Uracil phosphoribosyltransferase (216 aa).

GTP-binding positions include arginine 32, arginine 41, 75 to 78 (MGKI), and lysine 77. Residue serine 82 is modified to Phosphoserine. Position 85 (arginine 85) interacts with 5-phospho-alpha-D-ribose 1-diphosphate. Residue arginine 102 coordinates GTP. Position 110 (arginine 110) interacts with 5-phospho-alpha-D-ribose 1-diphosphate. Residue arginine 131 coordinates GTP. Residues aspartate 137 and 137-145 (DPMLATGGS) contribute to the 5-phospho-alpha-D-ribose 1-diphosphate site. Tyrosine 201 serves as a coordination point for D-ribose 5-phosphate. Uracil-binding positions include leucine 202 and 207 to 209 (GDF). 5-phospho-alpha-D-ribose 1-diphosphate is bound at residue aspartate 208.

The protein belongs to the UPRTase family. The cofactor is Mg(2+).

It carries out the reaction UMP + diphosphate = 5-phospho-alpha-D-ribose 1-diphosphate + uracil. Its pathway is pyrimidine metabolism; UMP biosynthesis via salvage pathway; UMP from uracil: step 1/1. Its activity is regulated as follows. Allosterically activated by GTP. Its function is as follows. Catalyzes the conversion of uracil and 5-phospho-alpha-D-ribose 1-diphosphate (PRPP) to UMP and diphosphate in the pyrimidine salvage pathway. The protein is Uracil phosphoribosyltransferase (FUR1) of Saccharomyces cerevisiae (strain ATCC 204508 / S288c) (Baker's yeast).